Reading from the N-terminus, the 501-residue chain is L-ornithine N(5)-monooxygenase (501 aa).

Residues 1 to 31 (MESVERKSESSYLGMRNMQPEQRLSLDPPRL) form a disordered region. FAD-binding positions include 83-91 (ERQKQFAWH) and Q102. K107 contributes to the substrate binding site. V168 contacts FAD. NADP(+)-binding positions include 254 to 257 (SGQS) and R279. Substrate is bound by residues 293–296 (NEIF) and N323. 323–325 (NYS) contributes to the NADP(+) binding site. The interval 366 to 390 (EHHGPQSRMRIHLKSSKPESEGAAN) is disordered. Basic and acidic residues predominate over residues 381–390 (SKPESEGAAN). 466–468 (SLL) lines the FAD pocket. Residue S469 participates in substrate binding.

This sequence belongs to the lysine N(6)-hydroxylase/L-ornithine N(5)-oxygenase family. As to quaternary structure, homotetramer. The cofactor is FAD.

The enzyme catalyses L-ornithine + NADPH + O2 = N(5)-hydroxy-L-ornithine + NADP(+) + H2O. It carries out the reaction L-ornithine + NADH + O2 = N(5)-hydroxy-L-ornithine + NAD(+) + H2O. Its pathway is siderophore biosynthesis; ferrichrome biosynthesis. Functionally, L-ornithine N(5)-monooxygenase; part of the siderophore biosynthetic pathway. Aspergillus fumigatus produces four types of siderophores, low-molecular-mass iron chelators, including excreted fusarinine C (FsC) and triacetylfusarinine C (TAFC) for iron uptake; and intacellular ferricrocin (FC) for hyphal and hydroxyferricrocin (HFC) for conidial iron distribution and storage. TAFC consists of three N(2)-acetyl-N(5)-anhydromevalonyl-N(5)-hydroxyornithine residues cyclically linked by ester bonds; FC is a cyclic hexapeptide with the structure Gly-Ser-Gly-(N(5)-acetyl-N(5)-hydroxyornithine)x3. The biosynthesis of all four siderophores depends on the hydroxylation of ornithine, catalyzed by the monooxygenase sidA. SidA is highly specific for its substrate, only hydrolyzing l-ornithine, and has preference for NADPH over NADH, NADPH playing a role in stabilization of the C4a-hydroperoxyflavin intermediate. Subsequently, the pathways for biosynthesis of extra- and intracellular siderophores split. For biosynthesis of extracellular siderophores, the transacylase sidF transfers anhydromevalonyl to N(5)-hydroxyornithine. The required anhydromevalonyl-CoA moiety is derived from mevalonate by CoA ligation and dehydration catalyzed by sidI and sidH respectively. The acetylation of N(5)-hydroxyornithine for FC biosynthesis involves the constitutively expressed sidL. FC is hydroxylated to HFC by an as yet uncharacterized enzyme during conidiation. Assembly of fusarinine C (FsC) and FC is catalyzed by two different nonribosomal peptide synthetases (NRPS), sidD and sidC respectively. Subsequently, sidG catalyzes N2-acetylation of FsC for forming TAFC. Both extra- and intracellular siderophores are crucial for growth during iron limitation and virulence. In Aspergillus fumigatus (strain ATCC MYA-4609 / CBS 101355 / FGSC A1100 / Af293) (Neosartorya fumigata), this protein is L-ornithine N(5)-monooxygenase.